The chain runs to 164 residues: Phosphopantetheine adenylyltransferase (164 aa).

Residue Ser9 participates in substrate binding. Residues Ser9–Phe10 and His17 each bind ATP. Residues Lys41, Val78, and Arg92 each coordinate substrate. Residues Gly93–Arg95, Glu103, and Val128–Thr134 each bind ATP.

It belongs to the bacterial CoaD family. As to quaternary structure, homohexamer. It depends on Mg(2+) as a cofactor.

Its subcellular location is the cytoplasm. The catalysed reaction is (R)-4'-phosphopantetheine + ATP + H(+) = 3'-dephospho-CoA + diphosphate. It participates in cofactor biosynthesis; coenzyme A biosynthesis; CoA from (R)-pantothenate: step 4/5. Its function is as follows. Reversibly transfers an adenylyl group from ATP to 4'-phosphopantetheine, yielding dephospho-CoA (dPCoA) and pyrophosphate. This Brucella suis (strain ATCC 23445 / NCTC 10510) protein is Phosphopantetheine adenylyltransferase.